A 405-amino-acid polypeptide reads, in one-letter code: Aurora kinase A (405 aa).

Composition is skewed to polar residues over residues 32–82 (VPSQ…QLQA) and 91–110 (RSLN…PGNN). The tract at residues 32-127 (VPSQNPLSAN…KQKNEESKKR (96 aa)) is disordered. Residues Ser-42 and Ser-52 each carry the phosphoserine modification. The segment covering 111–127 (SEKELATKQKNEESKKR) has biased composition (basic and acidic residues). The region spanning 134 to 384 (FEIGRPLGKG…LKDVLEHPWI (251 aa)) is the Protein kinase domain. ATP contacts are provided by residues Lys-144, Lys-163, and 212-214 (EYA). Asp-257 functions as the Proton acceptor in the catalytic mechanism. Residue Lys-259 forms a Glycyl lysine isopeptide (Lys-Gly) (interchain with G-Cter in SUMO2) linkage. Residues 261 to 262 (EN) and Asp-275 contribute to the ATP site. The activation segment stretch occupies residues 281-294 (HAPSSRRTTLCGTL). A phosphothreonine mark is found at Thr-288 and Thr-289. Phosphoserine is present on Ser-343. Residues 385–405 (MANSSKPSSSQKSKDSTSKQS) are disordered. Over residues 396-405 (KSKDSTSKQS) the composition is skewed to basic and acidic residues.

This sequence belongs to the protein kinase superfamily. Ser/Thr protein kinase family. Aurora subfamily. As to quaternary structure, part of a complex composed of NEDD9, AURKA and CTTN; within the complex NEDD9 acts as a scaffold protein and is required for complex formation. Identified in a complex with AUNIP and NIN. Interacts with FBXL7. Interacts with CPEB1, JTB, TACC1, TPX2, PPP2CA, as well as with the protein phosphatase type 1 (PP1) isoforms PPP1CA, PPP1CB and PPP1CC. Also interacts with its substrates ARHGEF2, BORA, KIF2A, PARD3, and p53/TP53. Interaction with BORA promotes phosphorylation of PLK1. Interacts with CIMAP3. Interacts with GADD45A, competing with its oligomerization. Interacts (via C-terminus) with AUNIP (via C-terminus). Interacts with FRY; this interaction facilitates AURKA-mediated PLK1 phosphorylation. Interacts with SIRT2. Interacts with MYCN; interaction is phospho-independent and triggers AURKA activation; AURKA competes with FBXW7 for binding to unphosphorylated MYCN but not for binding to phosphorylated MYCN. Interacts with HNRNPU. Interacts with AAAS. Interacts with KLHL18 and CUL3. Interacts with FOXP1. Interacts with HDAC6; AURKA-mediated phosphorylation of HDAC6 promotes deacetylation of alpha-tubulin. In terms of processing, activated by phosphorylation at Thr-289; this brings about a change in the conformation of the activation segment. Phosphorylation at Thr-289 varies during the cell cycle and is highest during M phase. Autophosphorylated at Thr-289 upon TPX2 binding. Thr-289 can be phosphorylated by several kinases, including PAK and PKA. Protein phosphatase type 1 (PP1) binds AURKA and inhibits its activity by dephosphorylating Thr-289 during mitosis. Phosphorylation at Ser-343 decreases the kinase activity. PPP2CA controls degradation by dephosphorylating Ser-52 at the end of mitosis. Post-translationally, ubiquitinated by the E3 ubiquitin-protein ligase complex SCF(FBXL7) during mitosis, leading to its degradation by the proteasome. Ubiquitinated by CHFR, leading to its degradation by the proteasome. Ubiquitinated by the anaphase-promoting complex (APC), leading to its degradation by the proteasome. Ubiquitinated by the CUL3-KLHL18 ligase leading to its activation at the centrosome which is required for initiating mitotic entry. Ubiquitination mediated by CUL3-KLHL18 ligase does not lead to its degradation by the proteasome.

The protein localises to the cytoplasm. The protein resides in the cytoskeleton. Its subcellular location is the microtubule organizing center. It localises to the centrosome. It is found in the spindle pole. The protein localises to the centriole. The protein resides in the cell projection. Its subcellular location is the neuron projection. It localises to the cilium. It is found in the cilium basal body. The protein localises to the basolateral cell membrane. It carries out the reaction L-seryl-[protein] + ATP = O-phospho-L-seryl-[protein] + ADP + H(+). It catalyses the reaction L-threonyl-[protein] + ATP = O-phospho-L-threonyl-[protein] + ADP + H(+). Its activity is regulated as follows. Activation of CDK1, appears to be an upstream event of AURKA activation. Phosphatase inhibitor-2 (PPP1R2) and TPX2 act also as activators. Inactivated by the G2 checkpoint. Inhibited by GADD45A and p53/TP53, and through dephosphorylation by protein phosphatase type 1 (PP1). MLN8054 is also a potent and selective inhibitor. Activated during the early phase of cilia disassembly in the presence of CIMAP3. Inhibited by the small molecule inhibitor VX-680. In terms of biological role, mitotic serine/threonine kinase that contributes to the regulation of cell cycle progression. Associates with the centrosome and the spindle microtubules during mitosis and plays a critical role in various mitotic events including the establishment of mitotic spindle, centrosome duplication, centrosome separation as well as maturation, chromosomal alignment, spindle assembly checkpoint, and cytokinesis. Required for normal spindle positioning during mitosis and for the localization of NUMA1 and DCTN1 to the cell cortex during metaphase. Required for initial activation of CDK1 at centrosomes. Phosphorylates numerous target proteins, including ARHGEF2, BORA, BRCA1, CDC25B, DLGP5, HDAC6, KIF2A, LATS2, NDEL1, PARD3, PPP1R2, PLK1, RASSF1, TACC3, p53/TP53 and TPX2. Phosphorylates MCRS1 which is required for MCRS1-mediated kinetochore fiber assembly and mitotic progression. Regulates KIF2A tubulin depolymerase activity. Important for microtubule formation and/or stabilization. Required for normal axon formation. Plays a role in microtubule remodeling during neurite extension. Also acts as a key regulatory component of the p53/TP53 pathway, and particularly the checkpoint-response pathways critical for oncogenic transformation of cells, by phosphorylating and destabilizing p53/TP53. Phosphorylates its own inhibitors, the protein phosphatase type 1 (PP1) isoforms, to inhibit their activity. Inhibits cilia outgrowth. Required for cilia disassembly via phosphorylation of HDAC6 and subsequent deacetylation of alpha-tubulin. Regulates protein levels of the anti-apoptosis protein BIRC5 by suppressing the expression of the SCF(FBXL7) E3 ubiquitin-protein ligase substrate adapter FBXL7 through the phosphorylation of the transcription factor FOXP1. The sequence is that of Aurora kinase A from Canis lupus familiaris (Dog).